Reading from the N-terminus, the 272-residue chain is Large ribosomal subunit protein uL2 (272 aa).

Residues 247–272 are disordered; sequence PWGQPCKGFKTRNNKRTNSSIIKRRK. Residues 262-272 show a composition bias toward polar residues; that stretch reads RTNSSIIKRRK.

It belongs to the universal ribosomal protein uL2 family. As to quaternary structure, part of the 50S ribosomal subunit. Forms a bridge to the 30S subunit in the 70S ribosome.

In terms of biological role, one of the primary rRNA binding proteins. Required for association of the 30S and 50S subunits to form the 70S ribosome, for tRNA binding and peptide bond formation. It has been suggested to have peptidyltransferase activity; this is somewhat controversial. Makes several contacts with the 16S rRNA in the 70S ribosome. The polypeptide is Large ribosomal subunit protein uL2 (Bdellovibrio bacteriovorus (strain ATCC 15356 / DSM 50701 / NCIMB 9529 / HD100)).